A 261-amino-acid polypeptide reads, in one-letter code: 5'-nucleotidase SurE (261 aa).

Residues Asp-8, Asp-9, Ser-43, and Asn-96 each contribute to the a divalent metal cation site.

Belongs to the SurE nucleotidase family. A divalent metal cation serves as cofactor.

The protein resides in the cytoplasm. The enzyme catalyses a ribonucleoside 5'-phosphate + H2O = a ribonucleoside + phosphate. Nucleotidase that shows phosphatase activity on nucleoside 5'-monophosphates. In Cereibacter sphaeroides (strain ATCC 17029 / ATH 2.4.9) (Rhodobacter sphaeroides), this protein is 5'-nucleotidase SurE.